The chain runs to 397 residues: CCA-adding enzyme (397 aa).

The ATP site is built by glycine 27 and arginine 30. Glycine 27 and arginine 30 together coordinate CTP. 2 residues coordinate Mg(2+): aspartate 40 and aspartate 42. ATP-binding residues include arginine 111, aspartate 154, arginine 157, arginine 160, and arginine 163. Arginine 111, aspartate 154, arginine 157, arginine 160, and arginine 163 together coordinate CTP.

This sequence belongs to the tRNA nucleotidyltransferase/poly(A) polymerase family. Bacterial CCA-adding enzyme type 3 subfamily. Homodimer. The cofactor is Mg(2+).

It carries out the reaction a tRNA precursor + 2 CTP + ATP = a tRNA with a 3' CCA end + 3 diphosphate. The enzyme catalyses a tRNA with a 3' CCA end + 2 CTP + ATP = a tRNA with a 3' CCACCA end + 3 diphosphate. In terms of biological role, catalyzes the addition and repair of the essential 3'-terminal CCA sequence in tRNAs without using a nucleic acid template. Adds these three nucleotides in the order of C, C, and A to the tRNA nucleotide-73, using CTP and ATP as substrates and producing inorganic pyrophosphate. tRNA 3'-terminal CCA addition is required both for tRNA processing and repair. Also involved in tRNA surveillance by mediating tandem CCA addition to generate a CCACCA at the 3' terminus of unstable tRNAs. While stable tRNAs receive only 3'-terminal CCA, unstable tRNAs are marked with CCACCA and rapidly degraded. The protein is CCA-adding enzyme of Bacillus licheniformis (strain ATCC 14580 / DSM 13 / JCM 2505 / CCUG 7422 / NBRC 12200 / NCIMB 9375 / NCTC 10341 / NRRL NRS-1264 / Gibson 46).